Here is a 137-residue protein sequence, read N- to C-terminus: Putative pre-16S rRNA nuclease (137 aa).

Belongs to the YqgF nuclease family.

The protein localises to the cytoplasm. Functionally, could be a nuclease involved in processing of the 5'-end of pre-16S rRNA. This Clostridium kluyveri (strain NBRC 12016) protein is Putative pre-16S rRNA nuclease.